Reading from the N-terminus, the 375-residue chain is Killer cell immunoglobulin-like receptor 2DL5B (375 aa).

The first 21 residues, 1 to 21 (MSLMVVSMACVGFFLLQGAWT), serve as a signal peptide directing secretion. Residues 22-238 (HEGGQDKPLL…PSSKTGIRRH (217 aa)) lie on the Extracellular side of the membrane. Ig-like C2-type domains follow at residues 42 to 102 (GGHV…HPRS) and 137 to 200 (GENV…LHDS). 2 disulfides stabilise this stretch: cysteine 49–cysteine 95 and cysteine 144–cysteine 193. The disordered stretch occupies residues 213-233 (VSVTGNSSSSSSSPTEPSSKT). The N-linked (GlcNAc...) asparagine glycan is linked to asparagine 218. The segment covering 219-231 (SSSSSSSPTEPSS) has biased composition (low complexity). Residues 239–259 (LHILIGTSVAIILFIILFFFL) form a helical membrane-spanning segment. Over 260–375 (LHCCCSNKKN…ASSHVPAAGI (116 aa)) the chain is Cytoplasmic. The interval 334-375 (AKPRSLSPAHKHHSQALRGSSRETTALSQNRVASSHVPAAGI) is disordered. Residues 355 to 366 (RETTALSQNRVA) are compositionally biased toward polar residues.

This sequence belongs to the immunoglobulin superfamily.

Its subcellular location is the cell membrane. Receptor on natural killer (NK) cells for HLA-C alleles. Inhibits the activity of NK cells thus preventing cell lysis. In Homo sapiens (Human), this protein is Killer cell immunoglobulin-like receptor 2DL5B (KIR2DL5B).